Reading from the N-terminus, the 358-residue chain is Protein Wnt-8b (358 aa).

The signal sequence occupies residues 1–23; it reads MFMHLEVYYYAFILMAHMKTCCG. An intrachain disulfide couples Cys55 to Cys66. Residue Asn104 is glycosylated (N-linked (GlcNAc...) asparagine). Disulfide bonds link Cys105/Cys113, Cys115/Cys133, Cys181/Cys195, Cys183/Cys190, Cys257/Cys295, Cys273/Cys288, Cys292/Cys334, Cys310/Cys325, Cys312/Cys322, and Cys317/Cys318. Ser187 carries O-palmitoleoyl serine lipidation. Asn260 and Asn279 each carry an N-linked (GlcNAc...) asparagine glycan. Asn345 carries an N-linked (GlcNAc...) asparagine glycan.

This sequence belongs to the Wnt family. Palmitoleoylation is required for efficient binding to frizzled receptors. Depalmitoleoylation leads to Wnt signaling pathway inhibition. In terms of processing, proteolytic processing by tiki1 and tiki2 promotes oxidation and formation of large disulfide-bond oligomers, leading to inactivation of wnt8b. Hindbrain r1, 2 and 5.

It is found in the secreted. The protein resides in the extracellular space. It localises to the extracellular matrix. Functionally, ligand for fzd8a, a member of the G-protein coupled frizzled receptor family. May play a role in the establishment of polarity in the nervous system. Involved in canonical Wnt signaling pathway. During embryonic development, required for the acquisition of caudal diencephalic fate. Antagonizes eye specification. This Danio rerio (Zebrafish) protein is Protein Wnt-8b (wnt8b).